The primary structure comprises 661 residues: uncharacterized protein (661 aa).

16 helical membrane-spanning segments follow: residues 27–47 (LAIG…VSGA), 68–88 (VGFF…IHVV), 116–136 (LWLG…TGVG), 150–170 (VAAS…LVVA), 179–199 (WLGH…TAVT), 214–234 (AAIV…AAAL), 251–271 (GALA…GWAV), 279–299 (GLLA…RLLV), 313–333 (GAAL…VMTA), 369–389 (SLIG…FAAL), 396–416 (WPVG…FTSG), 435–455 (MTLN…TLAL), 488–508 (PITA…TPLF), 519–539 (EFMA…IIGI), 552–572 (IGLL…LMTM), and 599–619 (GGGI…VALV).

The protein to M.leprae ML1998.

The protein localises to the cell membrane. This is an uncharacterized protein from Mycobacterium tuberculosis (strain CDC 1551 / Oshkosh).